The following is a 306-amino-acid chain: Glutaminase (306 aa).

The substrate site is built by Ser61, Asn111, Glu157, Asn164, Tyr188, Tyr240, and Val258.

This sequence belongs to the glutaminase family. Homotetramer.

It carries out the reaction L-glutamine + H2O = L-glutamate + NH4(+). The chain is Glutaminase from Pseudoalteromonas atlantica (strain T6c / ATCC BAA-1087).